Consider the following 417-residue polypeptide: MQPRRPDRFDGLEYRGTSWGRGEGDPPPYQSSFPARSFSSSGDLSQHWVTTPPDIPGSRNLHWGDKSPQYGGADSNAGPPAFGEENSNSANSGEQLNRFAGFGIGLASLFTENVLAHPCIVLRRQCQVNYHARNYQLSPFNIVNIMYNFTKTQGLRALWKGMGSTFIVQGISLGAEGILSEFTHLPRELNHKWNPKQIGGHLLLKGLVYVIVTPFYSASLIETVQSEIIHDNPGILDCLKEGMGRVLNLGVPYSKRLLPLLVLTFPTVLHGILHYIVSSTVQKCVLFFIKKKSPPRLPADGSNTVQNKLEDYFPELIANFAASLCADVLLYPLETVLHRLHIQGTRTIIDNTDLGHEVVPINTQYEGLKDCINTIKREEGGLGFYKGFGAVVVQYTLHAIVLQITKIIYSSVVQTSS.

The segment covering 1–13 has biased composition (basic and acidic residues); sequence MQPRRPDRFDGLE. The segment at 1-90 is disordered; sequence MQPRRPDRFD…AFGEENSNSA (90 aa). The segment covering 31 to 41 has biased composition (low complexity); the sequence is SSFPARSFSSS. A Solcar 1 repeat occupies 95–186; it reads QLNRFAGFGI…GILSEFTHLP (92 aa). Transmembrane regions (helical) follow at residues 102–122, 162–182, 198–218, 257–277, 313–333, and 382–402; these read FGIG…CIVL, MGST…LSEF, IGGH…FYSA, LLPL…HYIV, FPEL…LYPL, and LGFY…AIVL. Residues 310-415 form a Solcar 2 repeat; it reads EDYFPELIAN…KIIYSSVVQT (106 aa).

It belongs to the mitochondrial carrier (TC 2.A.29) family.

It is found in the mitochondrion outer membrane. Functionally, may play a role in mitochondrial dynamics by controlling mitochondrial membrane fission. In Xenopus laevis (African clawed frog), this protein is Solute carrier family 25 member 46-A (slc25a46-a).